A 436-amino-acid polypeptide reads, in one-letter code: Histidinol dehydrogenase (436 aa).

NAD(+) contacts are provided by tyrosine 130, glutamine 191, and asparagine 214. Serine 237, glutamine 259, and histidine 262 together coordinate substrate. Residues glutamine 259 and histidine 262 each coordinate Zn(2+). Active-site proton acceptor residues include glutamate 327 and histidine 328. Residues histidine 328, aspartate 361, glutamate 415, and histidine 420 each contribute to the substrate site. Aspartate 361 serves as a coordination point for Zn(2+). Zn(2+) is bound at residue histidine 420.

This sequence belongs to the histidinol dehydrogenase family. Zn(2+) serves as cofactor.

It catalyses the reaction L-histidinol + 2 NAD(+) + H2O = L-histidine + 2 NADH + 3 H(+). It functions in the pathway amino-acid biosynthesis; L-histidine biosynthesis; L-histidine from 5-phospho-alpha-D-ribose 1-diphosphate: step 9/9. Functionally, catalyzes the sequential NAD-dependent oxidations of L-histidinol to L-histidinaldehyde and then to L-histidine. This Geobacter metallireducens (strain ATCC 53774 / DSM 7210 / GS-15) protein is Histidinol dehydrogenase.